Here is a 463-residue protein sequence, read N- to C-terminus: Asparagine--tRNA ligase (463 aa).

This sequence belongs to the class-II aminoacyl-tRNA synthetase family. As to quaternary structure, homodimer.

Its subcellular location is the cytoplasm. The enzyme catalyses tRNA(Asn) + L-asparagine + ATP = L-asparaginyl-tRNA(Asn) + AMP + diphosphate + H(+). The polypeptide is Asparagine--tRNA ligase (Bacillus cereus (strain ATCC 10987 / NRS 248)).